The primary structure comprises 84 residues: ATP synthase subunit c (84 aa).

The next 2 helical transmembrane spans lie at 9 to 29 and 54 to 74; these read IIGA…GFAI and IVAG…LLFI.

This sequence belongs to the ATPase C chain family. F-type ATPases have 2 components, F(1) - the catalytic core - and F(0) - the membrane proton channel. F(1) has five subunits: alpha(3), beta(3), gamma(1), delta(1), epsilon(1). F(0) has three main subunits: a(1), b(2) and c(10-14). The alpha and beta chains form an alternating ring which encloses part of the gamma chain. F(1) is attached to F(0) by a central stalk formed by the gamma and epsilon chains, while a peripheral stalk is formed by the delta and b chains.

Its subcellular location is the cell inner membrane. Its function is as follows. F(1)F(0) ATP synthase produces ATP from ADP in the presence of a proton or sodium gradient. F-type ATPases consist of two structural domains, F(1) containing the extramembraneous catalytic core and F(0) containing the membrane proton channel, linked together by a central stalk and a peripheral stalk. During catalysis, ATP synthesis in the catalytic domain of F(1) is coupled via a rotary mechanism of the central stalk subunits to proton translocation. Key component of the F(0) channel; it plays a direct role in translocation across the membrane. A homomeric c-ring of between 10-14 subunits forms the central stalk rotor element with the F(1) delta and epsilon subunits. The chain is ATP synthase subunit c from Actinobacillus pleuropneumoniae serotype 7 (strain AP76).